The chain runs to 157 residues: Endoribonuclease YbeY (157 aa).

Residues H116, H120, and H126 each contribute to the Zn(2+) site.

Belongs to the endoribonuclease YbeY family. Zn(2+) serves as cofactor.

It is found in the cytoplasm. Single strand-specific metallo-endoribonuclease involved in late-stage 70S ribosome quality control and in maturation of the 3' terminus of the 16S rRNA. In Blochmanniella pennsylvanica (strain BPEN), this protein is Endoribonuclease YbeY.